The following is a 605-amino-acid chain: LysM domain receptor-like kinase 10 (605 aa).

The N-terminal stretch at 1-20 (MFSLPALLIGACAFAAAAVA) is a signal peptide. Over 21 to 245 (ASGDGCRAGC…GMGNSLSGGA (225 aa)) the chain is Extracellular. 3 disulfide bridges follow: cysteine 26/cysteine 89, cysteine 30/cysteine 161, and cysteine 87/cysteine 159. A glycan (N-linked (GlcNAc...) asparagine) is linked at asparagine 44. Residues 115–121 (GGDTYDA) and 142–148 (PPGRIPG) each bind chitin. N-linked (GlcNAc...) asparagine glycosylation is found at asparagine 154 and asparagine 158. A LysM domain is found at 174–221 (LTYPLWDGETLESVAAQYGFSSPAEMELIRRYNPGMGGVSGKGIVFIP). An N-linked (GlcNAc...) asparagine glycan is attached at asparagine 226. Residues 246 to 266 (IAGIVIACIAIFIVAIWLIIM) form a helical membrane-spanning segment. Residues 267–605 (FYRWQKFRKA…DLRDMDYHPF (339 aa)) lie on the Cytoplasmic side of the membrane. Serine 278 is modified (phosphoserine). The 275-residue stretch at 317-591 (FSMEHKIGQG…RSVVVALMAL (275 aa)) folds into the Protein kinase domain. Residues 323 to 331 (IGQGGFGSV) and lysine 344 each bind ATP. Aspartate 436 (proton acceptor) is an active-site residue.

It belongs to the protein kinase superfamily. Ser/Thr protein kinase family.

It is found in the cell membrane. The catalysed reaction is L-seryl-[protein] + ATP = O-phospho-L-seryl-[protein] + ADP + H(+). The enzyme catalyses L-threonyl-[protein] + ATP = O-phospho-L-threonyl-[protein] + ADP + H(+). In Oryza sativa subsp. japonica (Rice), this protein is LysM domain receptor-like kinase 10.